Here is a 201-residue protein sequence, read N- to C-terminus: MGAYKYLEELAKKKQSDVNLFLSRVRAWEYRQMNVIHRASRPSRPDKARRLGYKAKQGYVIYRIRVRRGGRKRPVPKGQTYGKPVHQGVNHLKYQRSARCTAEERVGRYCSNLRVLNSYWVNQDATYKFFEVILVDPSHKAIRRDPRINWIVNPVHKHRESRGLTSIGKKSRGIGKGHRFNNSPQHATWLRHNTLSLRRYR.

The interval 161–182 is disordered; that stretch reads SRGLTSIGKKSRGIGKGHRFNN. Residues 169 to 179 show a composition bias toward basic residues; that stretch reads KKSRGIGKGHR.

Belongs to the eukaryotic ribosomal protein eL15 family. In terms of assembly, component of the large ribosomal subunit (LSU). Mature yeast ribosomes consist of a small (40S) and a large (60S) subunit. The 40S small subunit contains 1 molecule of ribosomal RNA (18S rRNA) and at least 33 different proteins. The large 60S subunit contains 3 rRNA molecules (25S, 5.8S and 5S rRNA) and at least 46 different proteins.

It localises to the cytoplasm. Its subcellular location is the nucleus. The protein localises to the nucleolus. Its function is as follows. Component of the ribosome, a large ribonucleoprotein complex responsible for the synthesis of proteins in the cell. The small ribosomal subunit (SSU) binds messenger RNAs (mRNAs) and translates the encoded message by selecting cognate aminoacyl-transfer RNA (tRNA) molecules. The large subunit (LSU) contains the ribosomal catalytic site termed the peptidyl transferase center (PTC), which catalyzes the formation of peptide bonds, thereby polymerizing the amino acids delivered by tRNAs into a polypeptide chain. The nascent polypeptides leave the ribosome through a tunnel in the LSU and interact with protein factors that function in enzymatic processing, targeting, and the membrane insertion of nascent chains at the exit of the ribosomal tunnel. This chain is Large ribosomal subunit protein eL15A (rpl15), found in Schizosaccharomyces pombe (strain 972 / ATCC 24843) (Fission yeast).